Reading from the N-terminus, the 95-residue chain is Co-chaperonin GroES (95 aa).

Belongs to the GroES chaperonin family. Heptamer of 7 subunits arranged in a ring. Interacts with the chaperonin GroEL.

It is found in the cytoplasm. Functionally, together with the chaperonin GroEL, plays an essential role in assisting protein folding. The GroEL-GroES system forms a nano-cage that allows encapsulation of the non-native substrate proteins and provides a physical environment optimized to promote and accelerate protein folding. GroES binds to the apical surface of the GroEL ring, thereby capping the opening of the GroEL channel. The sequence is that of Co-chaperonin GroES from Marinobacter nauticus (strain ATCC 700491 / DSM 11845 / VT8) (Marinobacter aquaeolei).